Consider the following 444-residue polypeptide: Signal recognition particle 54 kDa protein (444 aa).

GTP-binding positions include 106–113 (GLQGSGKT), 187–191 (DTAGR), and 245–248 (SKLD).

This sequence belongs to the GTP-binding SRP family. SRP54 subfamily. Part of the signal recognition particle protein translocation system, which is composed of SRP and FtsY. Archaeal SRP consists of a 7S RNA molecule of 300 nucleotides and two protein subunits: SRP54 and SRP19.

It is found in the cytoplasm. It catalyses the reaction GTP + H2O = GDP + phosphate + H(+). Its function is as follows. Involved in targeting and insertion of nascent membrane proteins into the cytoplasmic membrane. Binds to the hydrophobic signal sequence of the ribosome-nascent chain (RNC) as it emerges from the ribosomes. The SRP-RNC complex is then targeted to the cytoplasmic membrane where it interacts with the SRP receptor FtsY. In Methanosphaera stadtmanae (strain ATCC 43021 / DSM 3091 / JCM 11832 / MCB-3), this protein is Signal recognition particle 54 kDa protein.